The sequence spans 643 residues: 1-deoxy-D-xylulose-5-phosphate synthase (643 aa).

Thiamine diphosphate is bound by residues His-78 and 119–121; that span reads AHS. A Mg(2+)-binding site is contributed by Asp-150. Residues 151 to 152, Asn-179, Tyr-288, and Glu-370 each bind thiamine diphosphate; that span reads GS. Residue Asn-179 participates in Mg(2+) binding.

Belongs to the transketolase family. DXPS subfamily. Homodimer. The cofactor is Mg(2+). Requires thiamine diphosphate as cofactor.

It carries out the reaction D-glyceraldehyde 3-phosphate + pyruvate + H(+) = 1-deoxy-D-xylulose 5-phosphate + CO2. It participates in metabolic intermediate biosynthesis; 1-deoxy-D-xylulose 5-phosphate biosynthesis; 1-deoxy-D-xylulose 5-phosphate from D-glyceraldehyde 3-phosphate and pyruvate: step 1/1. Catalyzes the acyloin condensation reaction between C atoms 2 and 3 of pyruvate and glyceraldehyde 3-phosphate to yield 1-deoxy-D-xylulose-5-phosphate (DXP). The polypeptide is 1-deoxy-D-xylulose-5-phosphate synthase (Brucella abortus (strain 2308)).